Reading from the N-terminus, the 429-residue chain is Glutamate-1-semialdehyde 2,1-aminomutase (429 aa).

Lys267 is subject to N6-(pyridoxal phosphate)lysine.

Belongs to the class-III pyridoxal-phosphate-dependent aminotransferase family. HemL subfamily. In terms of assembly, homodimer. Requires pyridoxal 5'-phosphate as cofactor.

Its subcellular location is the cytoplasm. It carries out the reaction (S)-4-amino-5-oxopentanoate = 5-aminolevulinate. It functions in the pathway porphyrin-containing compound metabolism; protoporphyrin-IX biosynthesis; 5-aminolevulinate from L-glutamyl-tRNA(Glu): step 2/2. This Xanthomonas euvesicatoria pv. vesicatoria (strain 85-10) (Xanthomonas campestris pv. vesicatoria) protein is Glutamate-1-semialdehyde 2,1-aminomutase.